A 430-amino-acid chain; its full sequence is Bifunctional protein GlmU (430 aa).

The tract at residues methionine 1–lysine 223 is pyrophosphorylase. Residues leucine 8–glycine 11, lysine 22, and glycine 81–threonine 82 contribute to the UDP-N-acetyl-alpha-D-glucosamine site. Aspartate 102 contacts Mg(2+). UDP-N-acetyl-alpha-D-glucosamine contacts are provided by glycine 135, glutamate 149, asparagine 164, and asparagine 221. Position 221 (asparagine 221) interacts with Mg(2+). Residues leucine 224–alanine 244 are linker. An N-acetyltransferase region spans residues glycine 245–lysine 430. UDP-N-acetyl-alpha-D-glucosamine-binding residues include arginine 308 and lysine 325. Residue histidine 336 is the Proton acceptor of the active site. Residues tyrosine 339 and asparagine 350 each coordinate UDP-N-acetyl-alpha-D-glucosamine. Acetyl-CoA contacts are provided by residues alanine 353, asparagine 359–tyrosine 360, serine 378, alanine 396, and arginine 413.

The protein in the N-terminal section; belongs to the N-acetylglucosamine-1-phosphate uridyltransferase family. It in the C-terminal section; belongs to the transferase hexapeptide repeat family. As to quaternary structure, homotrimer. It depends on Mg(2+) as a cofactor.

It is found in the cytoplasm. It catalyses the reaction alpha-D-glucosamine 1-phosphate + acetyl-CoA = N-acetyl-alpha-D-glucosamine 1-phosphate + CoA + H(+). The catalysed reaction is N-acetyl-alpha-D-glucosamine 1-phosphate + UTP + H(+) = UDP-N-acetyl-alpha-D-glucosamine + diphosphate. It functions in the pathway nucleotide-sugar biosynthesis; UDP-N-acetyl-alpha-D-glucosamine biosynthesis; N-acetyl-alpha-D-glucosamine 1-phosphate from alpha-D-glucosamine 6-phosphate (route II): step 2/2. Its pathway is nucleotide-sugar biosynthesis; UDP-N-acetyl-alpha-D-glucosamine biosynthesis; UDP-N-acetyl-alpha-D-glucosamine from N-acetyl-alpha-D-glucosamine 1-phosphate: step 1/1. The protein operates within bacterial outer membrane biogenesis; LPS lipid A biosynthesis. Its function is as follows. Catalyzes the last two sequential reactions in the de novo biosynthetic pathway for UDP-N-acetylglucosamine (UDP-GlcNAc). The C-terminal domain catalyzes the transfer of acetyl group from acetyl coenzyme A to glucosamine-1-phosphate (GlcN-1-P) to produce N-acetylglucosamine-1-phosphate (GlcNAc-1-P), which is converted into UDP-GlcNAc by the transfer of uridine 5-monophosphate (from uridine 5-triphosphate), a reaction catalyzed by the N-terminal domain. In Sulfurovum sp. (strain NBC37-1), this protein is Bifunctional protein GlmU.